Reading from the N-terminus, the 317-residue chain is MVWQGPQRRLLGSLNGTSPATPHFELAANQTGPRCLEVSIPNGLFLSLGLVSVVENVLVVAAIAKNRNLHSPMYYFIGCLAVSDLLVSVTNVLETAVMLLVEAGALAAQAAVVQQLDDIIDVLICGSMVSSLCFLGAIAVDRYLSIFYALRYHSIVTLPRAWRAISAIWVASVLSSTLFIAYYNHTAVLLCLVSFFVAMLVLMAVLYVHMLARARQHARGIARLRKRQHSVHQGFGLKGAATLTILLGIFFLCWGPFFLHLSLMVLCPQHPICGCVFQNFNLFLTLIICNSIIDPFIYAFRSQELRKTLQEVVLCSW.

Residues 1–37 are Extracellular-facing; it reads MVWQGPQRRLLGSLNGTSPATPHFELAANQTGPRCLE. N-linked (GlcNAc...) asparagine glycosylation is found at Asn15 and Asn29. A helical membrane pass occupies residues 38 to 63; that stretch reads VSIPNGLFLSLGLVSVVENVLVVAAI. At 64–72 the chain is on the cytoplasmic side; sequence AKNRNLHSP. A helical transmembrane segment spans residues 73 to 93; the sequence is MYYFIGCLAVSDLLVSVTNVL. Over 94–118 the chain is Extracellular; that stretch reads ETAVMLLVEAGALAAQAAVVQQLDD. A helical transmembrane segment spans residues 119 to 140; the sequence is IIDVLICGSMVSSLCFLGAIAV. Residues 141 to 163 are Cytoplasmic-facing; it reads DRYLSIFYALRYHSIVTLPRAWR. The helical transmembrane segment at 164–183 threads the bilayer; that stretch reads AISAIWVASVLSSTLFIAYY. The Extracellular portion of the chain corresponds to 184-191; the sequence is NHTAVLLC. A helical transmembrane segment spans residues 192–211; that stretch reads LVSFFVAMLVLMAVLYVHML. Topologically, residues 212–240 are cytoplasmic; sequence ARARQHARGIARLRKRQHSVHQGFGLKGA. Residues 241 to 266 traverse the membrane as a helical segment; it reads ATLTILLGIFFLCWGPFFLHLSLMVL. Residues 267 to 279 lie on the Extracellular side of the membrane; the sequence is CPQHPICGCVFQN. The helical transmembrane segment at 280-300 threads the bilayer; the sequence is FNLFLTLIICNSIIDPFIYAF. The Cytoplasmic segment spans residues 301–317; sequence RSQELRKTLQEVVLCSW. Cys315 carries the S-palmitoyl cysteine lipid modification.

Belongs to the G-protein coupled receptor 1 family. Interacts with MGRN1, but does not undergo MGRN1-mediated ubiquitination; this interaction competes with GNAS-binding and thus inhibits agonist-induced cAMP production. Interacts with OPN3; the interaction results in a decrease in MC1R-mediated cAMP signaling and ultimately a decrease in melanin production in melanocytes.

It localises to the cell membrane. Receptor for MSH (alpha, beta and gamma) and ACTH. The activity of this receptor is mediated by G proteins which activate adenylate cyclase. Mediates melanogenesis, the production of eumelanin (black/brown) and phaeomelanin (red/yellow), via regulation of cAMP signaling in melanocytes. This is Melanocyte-stimulating hormone receptor (MC1R) from Canis lupus familiaris (Dog).